The following is a 611-amino-acid chain: MAGSRGLPLLLLVLQLFLGPVLPVRAPVFGRSDTPTLSPEENEFVEEENQPVLVLSSEEPEPGPATVDCPRDCACSQEGVVDCGGIDLREFPGDLPEHTNHLSLQNNQLEKIYPEELSRLQRLETLNLQNNRLTSRGLPEEAFEHLTSLNYLYLANNKLTLAPRFLPNALISVDFAANYLTKIYGLTFGQKPNLRSVYLHNNKLADAGLPDHMFNGSSNVEILILSSNFLRHVPKHLPPALYKLHLKNNKLEKIPPGAFSELSNLRELYLQNNYLTDEGLDNETFWKLSSLEYLDLSSNNLSRVPAGLPRSLVLLHLEKNAIQSVEADVLTPIRNLEYLLLHSNQLQAKGIHPLAFQGLKKLHTVHLYNNALERVPSGLPRRVRTLMILHNQITGIGREDFATTYFLEELNLSYNRITSPQMHRDAFRKLRLLRSLDLSGNRLQTLPPGLPKNVHVLKVKRNELAALARGALAGMAQLRELYLTGNRLRSRALGPRAWVDLAGLQLLDIAGNQLTEVPEGLPPSLEYLYLQNNKISAVPANAFDSTPNLKGIFLRFNKLAVGSVVESAFRRLKHLQVLDIEGNFEFGNGSKDKDEEEEEEEEEEDEEEETR.

The first 23 residues, 1-23 (MAGSRGLPLLLLVLQLFLGPVLP), serve as a signal peptide directing secretion. One can recognise an LRRNT domain in the interval 60–97 (PEPGPATVDCPRDCACSQEGVVDCGGIDLREFPGDLPE). 5 LRR repeats span residues 98–119 (HTNH…ELSR), 122–145 (RLET…AFEH), 148–169 (SLNY…LPNA), 170–190 (LISV…TFGQ), and 193–213 (NLRS…PDHM). N-linked (GlcNAc...) asparagine glycosylation is present at Asn215. LRR repeat units follow at residues 219–239 (NVEI…HLPP), 240–261 (ALYK…AFSE), 264–284 (NLRE…DNET), 290–311 (SLEY…LPRS), 312–332 (LVLL…VLTP), 335–358 (NLEY…AFQG), 361–382 (KLHT…LPRR), 383–403 (VRTL…DFAT), 406–427 (FLEE…RDAF), 432–453 (LLRS…LPKN), 477–490 (QLRE…RLRS), 503–523 (GLQL…GLPP), 524–545 (SLEY…AFDS), 548–569 (NLKG…ESAF), and 574–583 (HLQVLDIEGN). Asn282 is a glycosylation site (N-linked (GlcNAc...) asparagine). Asn411 carries an N-linked (GlcNAc...) asparagine glycan. The interval 585 to 611 (EFGNGSKDKDEEEEEEEEEEDEEEETR) is disordered. Positions 594-611 (DEEEEEEEEEEDEEEETR) are enriched in acidic residues.

Belongs to the small leucine-rich proteoglycan (SLRP) family. SLRP class V subfamily. As to quaternary structure, binds to type I collagen. N-glycosylated. As to expression, kidney. Expressed in podocytes and likely vascular endothelial cells within the glomerulus.

The protein resides in the secreted. It is found in the extracellular space. It localises to the extracellular matrix. Negatively regulates cell proliferation and cell migration, especially in smooth muscle cells. The polypeptide is Podocan (Podn) (Mus musculus (Mouse)).